Reading from the N-terminus, the 370-residue chain is MNERTSDAFDALLVLSFGGPEGHEEVRPFLENVTRGRGIPPERLDDVAVHYHHFGGISPINALNREIIANVEKELASRNRELPVYFGNRNWKPFGNEAAEQMADDGVKNALVLATSAWGGYSGCQQYQEDIRGMIKHLESQGQSVTFTKLRQFYDHPRFVSTMAQLVQDSYAKLPDELRDEARLVFTAHSIPLAADNAAGTPQDGSLYSSQVKEASALIAKAVGVSDFDVVWQSRSGSPHTPWLEPDIVDHAVELNEKGQKALVVCPVGFISDHMEVIWDLDSELMEEAEKRNMVVERVATVGPTDEFAALVVDLIEEAELKRVIERLGKLPARGSSINGAPCSEGCCGTAKHQTARVNPNARSAAPAAN.

Fe-coproporphyrin III is bound by residues Ser-58 and Tyr-127. His-189 and Glu-276 together coordinate Fe(2+).

The protein belongs to the ferrochelatase family.

The protein resides in the cytoplasm. It carries out the reaction Fe-coproporphyrin III + 2 H(+) = coproporphyrin III + Fe(2+). The protein operates within porphyrin-containing compound metabolism; protoheme biosynthesis. In terms of biological role, involved in coproporphyrin-dependent heme b biosynthesis. Catalyzes the insertion of ferrous iron into coproporphyrin III to form Fe-coproporphyrin III. This chain is Coproporphyrin III ferrochelatase, found in Corynebacterium glutamicum (strain R).